A 227-amino-acid polypeptide reads, in one-letter code: Triosephosphate isomerase (227 aa).

6 to 8 lines the substrate pocket; it reads NLK. Residue His85 is the Electrophile of the active site. Glu152 acts as the Proton acceptor in catalysis. Substrate is bound by residues Gly158 and Ser188.

Belongs to the triosephosphate isomerase family. Homodimer.

The protein resides in the cytoplasm. The catalysed reaction is D-glyceraldehyde 3-phosphate = dihydroxyacetone phosphate. The protein operates within carbohydrate biosynthesis; gluconeogenesis. It participates in carbohydrate degradation; glycolysis; D-glyceraldehyde 3-phosphate from glycerone phosphate: step 1/1. Its function is as follows. Involved in the gluconeogenesis. Catalyzes stereospecifically the conversion of dihydroxyacetone phosphate (DHAP) to D-glyceraldehyde-3-phosphate (G3P). The sequence is that of Triosephosphate isomerase from Campylobacter concisus (strain 13826).